Consider the following 73-residue polypeptide: Putative membrane protein insertion efficiency factor (73 aa).

It belongs to the UPF0161 family.

The protein localises to the cell inner membrane. Its function is as follows. Could be involved in insertion of integral membrane proteins into the membrane. This is Putative membrane protein insertion efficiency factor from Phocaeicola vulgatus (strain ATCC 8482 / DSM 1447 / JCM 5826 / CCUG 4940 / NBRC 14291 / NCTC 11154) (Bacteroides vulgatus).